The following is a 475-amino-acid chain: ISWI one complex protein 4 (475 aa).

Serine 2 bears the Phosphoserine mark. Threonine 9 bears the Phosphothreonine mark. Disordered regions lie at residues 42-84 (VSVH…DFGE), 181-296 (EEEY…IKYH), and 454-475 (EMDREKPSFSEDVKEEESKVGA). 2 positions are modified to phosphoserine: serine 65 and serine 73. Composition is skewed to acidic residues over residues 72-84 (QSEEEEDIEDFGE), 181-193 (EEEYVEEEEEENE), and 241-252 (ASEEEEEEEEEK). Residue serine 242 is modified to Phosphoserine. Basic residues predominate over residues 259-294 (KRPQRTKTKKVVVSKTKPNPKTKAKKEKPKPPKPIK). Residues 456-475 (DREKPSFSEDVKEEESKVGA) show a composition bias toward basic and acidic residues.

Component of the ISW1B complex, which at least consists of ISW1, IOC2 and IOC4.

It is found in the nucleus. Functions as a component of the ISW1B complex, which acts in remodeling the chromatin by catalyzing an ATP-dependent alteration in the structure of nucleosomal DNA. The ISW1B complex acts within coding regions to control the amount of RNA polymerase II released into productive elongation and to coordinate elongation with termination and pre-mRNA processing. The sequence is that of ISWI one complex protein 4 (IOC4) from Saccharomyces cerevisiae (strain ATCC 204508 / S288c) (Baker's yeast).